Reading from the N-terminus, the 116-residue chain is Transcription elongation factor SPT4 homolog 2 (116 aa).

The C4-type zinc finger occupies cysteine 19–cysteine 39.

This sequence belongs to the SPT4 family.

Its subcellular location is the nucleus. Its function is as follows. May regulate transcription elongation by RNA polymerase II. May enhance transcriptional pausing at sites proximal to the promoter, which may in turn facilitate the assembly of an elongation competent RNA polymerase II complex. This chain is Transcription elongation factor SPT4 homolog 2, found in Arabidopsis thaliana (Mouse-ear cress).